Consider the following 106-residue polypeptide: Thioredoxin (106 aa).

Positions 2–106 (VNFLKTKADF…GLREKIKKNK (105 aa)) constitute a Thioredoxin domain. Residues cysteine 32 and cysteine 35 each act as nucleophile in the active site. A disulfide bridge connects residues cysteine 32 and cysteine 35.

The protein belongs to the thioredoxin family.

It is found in the cytoplasm. In terms of biological role, participates in various redox reactions through the reversible oxidation of its active center dithiol to a disulfide and catalyzes dithiol-disulfide exchange reactions. The protein is Thioredoxin (THIO) of Geodia cydonium (Sponge).